A 386-amino-acid chain; its full sequence is Phosphoglycerate kinase (386 aa).

Residues 21 to 23 (DLN), Arg36, 59 to 62 (HLGR), Arg112, and Arg145 contribute to the substrate site. ATP contacts are provided by residues Lys196, Glu313, and 339 to 342 (GGDT).

It belongs to the phosphoglycerate kinase family. Monomer.

Its subcellular location is the cytoplasm. The catalysed reaction is (2R)-3-phosphoglycerate + ATP = (2R)-3-phospho-glyceroyl phosphate + ADP. It participates in carbohydrate degradation; glycolysis; pyruvate from D-glyceraldehyde 3-phosphate: step 2/5. In Haemophilus influenzae (strain PittEE), this protein is Phosphoglycerate kinase.